A 475-amino-acid chain; its full sequence is Gamma-aminobutyric acid receptor subunit gamma-2 (475 aa).

The first 39 residues, 1–39 (MSSPNIWSTGSSVYSTPVFSQKMTVWILLLLSLYPGFTS), serve as a signal peptide directing secretion. Residues 40 to 275 (QKSDDDYEDY…FDLSRRMGYF (236 aa)) are Extracellular-facing. 2 N-linked (GlcNAc...) asparagine glycosylation sites follow: asparagine 52 and asparagine 129. A disulfide bond links cysteine 190 and cysteine 204. N-linked (GlcNAc...) asparagine glycosylation occurs at asparagine 247. Residues 276–296 (TIQTYIPCTLIVVLSWVSFWI) form a helical membrane-spanning segment. Residues 297–302 (NKDAVP) lie on the Cytoplasmic side of the membrane. Residues 303–322 (ARTSLGITTVLTMTTLSTIA) traverse the membrane as a helical segment. At 323 to 334 (RKSLPKVSYVTA) the chain is on the extracellular side. The helical transmembrane segment at 335 to 359 (MDLFVSVCFIFVFSALVEYGTLHYF) threads the bilayer. Topologically, residues 360 to 451 (VSNRKPSKDK…IHIRIAKMDS (92 aa)) are cytoplasmic. The tract at residues 433–450 (RTGAWRHGRIHIRIAKMD) is interaction with GABARAP. The helical transmembrane segment at 452–472 (YARIFFPTAFCLFNLVYWVSY) threads the bilayer. The Extracellular segment spans residues 473–475 (LYL).

This sequence belongs to the ligand-gated ion channel (TC 1.A.9) family. Gamma-aminobutyric acid receptor (TC 1.A.9.5) subfamily. GABRG2 sub-subfamily. Heteropentamer, formed by a combination of alpha (GABRA1-6), beta (GABRB1-3), gamma (GABRG1-3), delta (GABRD), epsilon (GABRE), rho (GABRR1-3), pi (GABRP) and theta (GABRQ) chains, each subunit exhibiting distinct physiological and pharmacological properties. Interacts with GABARAP. Interacts with KIF21B. Identified in a complex of 720 kDa composed of LHFPL4, NLGN2, GABRA1, GABRB2, GABRG2 and GABRB3. Interacts with LHFPL4. Interacts with SHISA7; interaction leads to the regulation of GABA(A) receptor trafficking, channel deactivation kinetics and pharmacology. In terms of processing, palmitoylated by ZDHHC3/GODZ; required for the accumulation of GABA(A) receptors at the postsynaptic membrane of inhibitory GABAergic synapses.

The protein resides in the postsynaptic cell membrane. It localises to the cell membrane. It is found in the cell projection. Its subcellular location is the dendrite. The protein localises to the cytoplasmic vesicle membrane. The enzyme catalyses chloride(in) = chloride(out). With respect to regulation, allosterically activated by benzodiazepines. Activated by pentobarbital. Potentiated by etomidate, propofol, pregnanolone. Inhibited by the antagonist bicuculline. Inhibited by zinc ions. Potentiated by histamine. Its function is as follows. Gamma subunit of the heteropentameric ligand-gated chloride channel gated by gamma-aminobutyric acid (GABA), a major inhibitory neurotransmitter in the brain. GABA-gated chloride channels, also named GABA(A) receptors (GABAAR), consist of five subunits arranged around a central pore and contain GABA active binding site(s) located at the alpha and beta subunit interface(s). When activated by GABA, GABAARs selectively allow the flow of chloride anions across the cell membrane down their electrochemical gradient. Gamma-2/GABRG2-containing GABAARs are found at both synaptic and extrasynaptic sites. Chloride influx into the postsynaptic neuron following GABAAR opening decreases the neuron ability to generate a new action potential, thereby reducing nerve transmission. GABAARs containing alpha-1 and beta-2 or -3 subunits exhibit synaptogenic activity; the gamma-2 subunit being necessary but not sufficient to induce rapid synaptic contacts formation. Extrasynaptic gamma-2-containing receptors contribute to the tonic GABAergic inhibition. GABAARs function also as histamine receptor where histamine binds at the interface of two neighboring beta subunits and potentiates GABA response in a gamma-2 subunit-controlled manner. This Homo sapiens (Human) protein is Gamma-aminobutyric acid receptor subunit gamma-2.